The primary structure comprises 687 residues: Chloride channel protein ClC-Ka (687 aa).

The next 4 membrane-spanning stretches (helical) occupy residues F52–G72, L161–G181, V202–F222, and Y236–F256. The Ca(2+) site is built by E259, E261, D278, and E281. The next 6 helical transmembrane spans lie at I282–C302, P325–G345, F396–A416, T417–G437, I452–A472, and L486–L506. The Cytoplasmic portion of the chain corresponds to A507–K687. 2 CBS domains span residues M551 to S612 and T628 to A686.

The protein belongs to the chloride channel (TC 2.A.49) family. CLCNKA subfamily. Homodimer. Interacts with BSND. As to expression, expressed predominantly in the kidney.

The protein localises to the basolateral cell membrane. It catalyses the reaction chloride(in) = chloride(out). The enzyme catalyses bromide(in) = bromide(out). It carries out the reaction nitrate(in) = nitrate(out). The catalysed reaction is iodide(out) = iodide(in). In terms of biological role, anion-selective channel permeable to small monovalent anions with ion selectivity for chloride &gt; bromide &gt; nitrate &gt; iodide. Forms a homodimeric channel where each subunit has its own ion conduction pathway. May conduct double-barreled currents controlled by two types of gates, two fast gates that control each subunit independently and a slow common gate that opens and shuts off both subunits simultaneously. Assembles with the regulatory subunit BSND/Barttin for sorting at the basolateral plasma membrane domain and functional switch to the ion conducting state. CLCNKA:BSND channels display mostly a linear current-voltage relationship with fast gating at negative potentials. Mediates transepithelial chloride transport from the lumen to interstitial compartment along the thin ascending limb of Henle's loop, contributing to generation of hypertonic medullary interstitium as a countercurrent system to achieve urine concentration. Conducts chloride currents in the stria vascularis of the inner ear to establish the endocochlear potential necessary for normal hearing. The polypeptide is Chloride channel protein ClC-Ka (CLCNKA) (Oryctolagus cuniculus (Rabbit)).